Here is a 432-residue protein sequence, read N- to C-terminus: Asparagine--tRNA ligase (432 aa).

This sequence belongs to the class-II aminoacyl-tRNA synthetase family. As to quaternary structure, homodimer.

It is found in the cytoplasm. It carries out the reaction tRNA(Asn) + L-asparagine + ATP = L-asparaginyl-tRNA(Asn) + AMP + diphosphate + H(+). The sequence is that of Asparagine--tRNA ligase from Lactobacillus helveticus (strain DPC 4571).